Consider the following 218-residue polypeptide: Octanoyltransferase (218 aa).

A BPL/LPL catalytic domain is found at 27 to 210 (AGAEETLYLL…QFRAIFADST (184 aa)). Substrate is bound by residues 72 to 79 (RGGNITCH), 139 to 141 (SIG), and 152 to 154 (GFA). Cys-170 (acyl-thioester intermediate) is an active-site residue.

Belongs to the LipB family.

The protein resides in the cytoplasm. The catalysed reaction is octanoyl-[ACP] + L-lysyl-[protein] = N(6)-octanoyl-L-lysyl-[protein] + holo-[ACP] + H(+). Its pathway is protein modification; protein lipoylation via endogenous pathway; protein N(6)-(lipoyl)lysine from octanoyl-[acyl-carrier-protein]: step 1/2. Its function is as follows. Catalyzes the transfer of endogenously produced octanoic acid from octanoyl-acyl-carrier-protein onto the lipoyl domains of lipoate-dependent enzymes. Lipoyl-ACP can also act as a substrate although octanoyl-ACP is likely to be the physiological substrate. The sequence is that of Octanoyltransferase from Nitratidesulfovibrio vulgaris (strain DSM 19637 / Miyazaki F) (Desulfovibrio vulgaris).